The sequence spans 336 residues: Potassium channel subfamily K member 1 (336 aa).

Residues 1–20 are Cytoplasmic-facing; that stretch reads MLQSLAGSSCVRLVERHRSA. The chain crosses the membrane as a helical span at residues 21-41; it reads WCFGFLVLGYLLYLVFGAVVF. Residues 42 to 103 are Extracellular-facing; sequence SSVELPYEDL…SNASGNWNWD (62 aa). Asn-95 carries N-linked (GlcNAc...) asparagine glycosylation. The helical intramembrane region spans 104 to 116; the sequence is FTSALFFASTVLS. An intramembrane segment occupies 117 to 122; it reads TTGYGH. The tract at residues 117–122 is selectivity filter 1; the sequence is TTGYGH. Over 123-132 the chain is Extracellular; sequence TVPLSDGGKA. Residues 133-156 form a helical membrane-spanning segment; sequence FCIIYSVIGIPFTLLFLTAVVQRV. At 157-181 the chain is on the cytoplasmic side; that stretch reads TVHVTRRPVLYFHIRWGFSKQVVAI. Residues 182–202 traverse the membrane as a helical segment; it reads VHAVLLGFVTVSCFFFIPAAV. Residues 203 to 211 lie on the Extracellular side of the membrane; that stretch reads FSVLEDDWN. Positions 212 to 224 form an intramembrane region, helical; the sequence is FLESFYFCFISLS. A selectivity filter 2 region spans residues 225 to 230; it reads TIGLGD. The stretch at 225-231 is an intramembrane region; sequence TIGLGDY. The Extracellular portion of the chain corresponds to 232 to 243; that stretch reads VPGEGYNQKFRE. A helical transmembrane segment spans residues 244–267; that stretch reads LYKIGITCYLLLGLIAMLVVLETF. The Cytoplasmic portion of the chain corresponds to 268 to 336; it reads CELHELKKFR…PPYEDGSADH (69 aa). A Glycyl lysine isopeptide (Lys-Gly) (interchain with G-Cter in SUMO) cross-link involves residue Lys-274. Positions 293–299 are important for intracellular retention in recycling endosomes; it reads IMEHDQL. The interval 310-336 is disordered; that stretch reads GLKEEQKQSEPFVASQSPPYEDGSADH. Position 326 is a phosphoserine (Ser-326).

It belongs to the two pore domain potassium channel (TC 1.A.1.8) family. As to quaternary structure, homodimer; disulfide-linked. Heterodimer with KCNK2; disulfide-linked. In astrocytes, forms mostly heterodimeric potassium channels with KCNK2, with only a minor proportion of functional channels containing homodimeric KCNK1. Interacts with KCNK3 and KCNK9, forming functional heterodimeric channels. Interacts with GNG4. Identified in a complex with PSD and ARF6; interacts only with PSD that is bound to ARF6. Interacts with UBE2I. In terms of processing, sumoylation is controversial. Sumoylated by UBE2I. Not sumoylated when expressed in xenopus oocytes or mammalian cells. Sumoylation inactivates the channel, but does not interfere with expression at the cell membrane. Sumoylation of a single subunit is sufficient to silence the dimeric channel. Sumoylation of KCNK1 is sufficient to silence heterodimeric channels formed by KCNK1 and KCNK3 or KCNK9. Desumoylated by SENP1; this activates the channel. Desumoylated by SENP1; this strongly increases halothane-mediated activation of heterodimeric channels formed with KCNK9. SENP1 treatment has no effect. In terms of tissue distribution, detected in spiral ganglion neurons. Detected in hippocampus CA1 and CA1 regions and in the molecular layer of the dentate gyrus. Detected on hippocampus astrocytes. Highly expressed in the stria vascularis in the cochlea. Detected in pancreas islet beta cells. Detected in kidney, at brush border membranes in proximal tubules and in cytoplasmic structures in distal convoluted tubules, thick ascending limbs and collecting ducts (at protein level). Widely expressed. Detected in spiral ganglion cells. Highest expression in brain, kidney, thyroid, salivary gland, adrenal gland, prostate, epididymis, uterus, placenta, colon and jejunum. Moderate expression in eyes, pituitary, pancreas, smooth muscle, testis and ovary. Very low levels in lung, aorta, liver, heart, skeletal muscle, thymus and spleen. In the brain, highest expression in cerebellar granule cells, brainstem, hippocampus and cerebral cortex.

The protein resides in the cell membrane. It localises to the recycling endosome. It is found in the apical cell membrane. Its subcellular location is the cytoplasmic vesicle. The protein localises to the perikaryon. The protein resides in the cell projection. It localises to the dendrite. It is found in the synaptic cell membrane. The enzyme catalyses K(+)(in) = K(+)(out). It carries out the reaction NH4(+)(in) = NH4(+)(out). The catalysed reaction is Na(+)(in) = Na(+)(out). It catalyses the reaction Rb(+)(in) = Rb(+)(out). The enzyme catalyses Cs(+)(in) = Cs(+)(out). It carries out the reaction Li(+)(in) = Li(+)(out). The catalysed reaction is L-glutamate(out) = L-glutamate(in). It catalyses the reaction chloride(in) = chloride(out). With respect to regulation, inhibited by quinine, quinidine, barium, and internal acidification. Functionally, ion channel that contributes to passive transmembrane potassium transport and to the regulation of the resting membrane potential in brain astrocytes, but also in kidney and in other tissues. Forms dimeric channels through which potassium ions pass in accordance with their electrochemical gradient. The channel is selective for K(+) ions at physiological potassium concentrations and at neutral pH, but becomes permeable to Na(+) at subphysiological K(+) levels and upon acidification of the extracellular medium. The homodimer has very low potassium channel activity, when expressed in heterologous systems, and can function as weakly inward rectifying potassium channel. Channel activity is modulated by activation of serotonin receptors. Heterodimeric channels containing KCNK1 and KCNK2 have much higher activity, and may represent the predominant form in astrocytes. Heterodimeric channels containing KCNK1 and KCNK3 or KCNK9 have much higher activity. Heterodimeric channels formed by KCNK1 and KCNK9 may contribute to halothane-sensitive currents. Mediates outward rectifying potassium currents in dentate gyrus granule cells and contributes to the regulation of their resting membrane potential. Contributes to the regulation of action potential firing in dentate gyrus granule cells and down-regulates their intrinsic excitability. In astrocytes, the heterodimer formed by KCNK1 and KCNK2 is required for rapid glutamate release in response to activation of G-protein coupled receptors, such as F2R and CNR1. Required for normal ion and water transport in the kidney. Contributes to the regulation of the resting membrane potential of pancreatic beta cells. The low channel activity of homodimeric KCNK1 may be due to sumoylation. The low channel activity may be due to rapid internalization from the cell membrane and retention in recycling endosomes. Permeable to monovalent cations with ion selectivity for K(+) &gt; Rb(+) &gt;&gt; NH4(+) &gt;&gt; Cs(+) = Na(+) = Li(+). In Mus musculus (Mouse), this protein is Potassium channel subfamily K member 1 (Kcnk1).